The primary structure comprises 522 residues: MSAFSVEKIGLQDSQQFSKLFIDYLAQQEHIQPLYTFYPDMAGLETAIEKRSKQPINRTVLVERLKAQYKDLPVSEKVQQNIERLASEHTFTITTGHQLCLGTGPLYLILKTLSCVKLCEALKTKHADNEFVPVFWMASEDHDAAEINHFYVFGKKYTWETTQTGAVGRFTTTGISEVLETIKDIPAWLKDAYQSSVTLAEATRKVMHQLFAEYGVVVIDGDDAALKKEFTAVIEKELFEQPAVAVMNQTNRSIERHGYSIQVNPRDINLFYVKDSLRERIEKQGERFVVLHTDVSFSAGEIKKEVADHPERFSPNVVLRPLYESTILPDIAYVGGPGEIAYWLQLKEVFAVYNTFLPAIFPRMFSGVITKQQCVKLEKAHVTVAELFLSEFDLKQVVVSRSIQEEISIEAEAGKITAAFDTIASIAATVDGSLQSWAQAEKAKALKQLEDIEKKLRKAEERKHDDVIKSVLGIRDKILPNGKLQERQESVFTFLVNDAQLIEKLYQSLDPCTFNIQMCCYE.

A coiled-coil region spans residues 436 to 469; sequence SWAQAEKAKALKQLEDIEKKLRKAEERKHDDVIK.

The protein belongs to the BshC family.

The polypeptide is Putative cysteine ligase BshC (Cytophaga hutchinsonii (strain ATCC 33406 / DSM 1761 / CIP 103989 / NBRC 15051 / NCIMB 9469 / D465)).